The following is a 68-amino-acid chain: Protein SlyX homolog (68 aa).

This sequence belongs to the SlyX family.

This Pseudomonas entomophila (strain L48) protein is Protein SlyX homolog.